Reading from the N-terminus, the 159-residue chain is MNHLNNIINRIFSQDKNKAEKISRYLTTMIDQDYITDDDENILYQFSQEFNNMSDNLFEFIGNVVNQNIVFNVPQLSIYLSEDKIDVPCSRLNTYLKCYWHKITYKSGLLREKVWVPIKDFSGNIIIERANVISYQKEDLPYLLIYISRYLKTIDYRTS.

Belongs to the mimivirus L761/L899 family.

This is an uncharacterized protein from Acanthamoeba polyphaga mimivirus (APMV).